The sequence spans 125 residues: Aspartate 1-decarboxylase 2 (125 aa).

Residue Ser-25 is the Schiff-base intermediate with substrate; via pyruvic acid of the active site. A Pyruvic acid (Ser) modification is found at Ser-25. Thr-57 is a binding site for substrate. The Proton donor role is filled by Tyr-58. 73 to 75 (GAA) provides a ligand contact to substrate.

The protein belongs to the PanD family. In terms of assembly, heterooctamer of four alpha and four beta subunits. Requires pyruvate as cofactor. In terms of processing, is synthesized initially as an inactive proenzyme, which is activated by self-cleavage at a specific serine bond to produce a beta-subunit with a hydroxyl group at its C-terminus and an alpha-subunit with a pyruvoyl group at its N-terminus.

The protein resides in the cytoplasm. The catalysed reaction is L-aspartate + H(+) = beta-alanine + CO2. It participates in cofactor biosynthesis; (R)-pantothenate biosynthesis; beta-alanine from L-aspartate: step 1/1. Catalyzes the pyruvoyl-dependent decarboxylation of aspartate to produce beta-alanine. The polypeptide is Aspartate 1-decarboxylase 2 (Gloeobacter violaceus (strain ATCC 29082 / PCC 7421)).